A 307-amino-acid chain; its full sequence is tRNA dimethylallyltransferase (307 aa).

An ATP-binding site is contributed by Gly9–Thr16. Thr11–Thr16 contacts substrate. The tract at residues Asp34 to Gln37 is interaction with substrate tRNA.

It belongs to the IPP transferase family. Monomer. Mg(2+) serves as cofactor.

The catalysed reaction is adenosine(37) in tRNA + dimethylallyl diphosphate = N(6)-dimethylallyladenosine(37) in tRNA + diphosphate. Functionally, catalyzes the transfer of a dimethylallyl group onto the adenine at position 37 in tRNAs that read codons beginning with uridine, leading to the formation of N6-(dimethylallyl)adenosine (i(6)A). The sequence is that of tRNA dimethylallyltransferase from Levilactobacillus brevis (strain ATCC 367 / BCRC 12310 / CIP 105137 / JCM 1170 / LMG 11437 / NCIMB 947 / NCTC 947) (Lactobacillus brevis).